The sequence spans 366 residues: Elongation factor Ts, mitochondrial (366 aa).

Residues 1–50 (MAWSQSARKPMIGLLFRAQQHSARGYSYSAFQAHLSSSNVDQSATLLRRF) constitute a mitochondrion transit peptide.

Belongs to the EF-Ts family.

The protein localises to the mitochondrion. Associates with the EF-Tu.GDP complex and induces the exchange of GDP to GTP. It remains bound to the aminoacyl-tRNA.EF-Tu.GTP complex up to the GTP hydrolysis stage on the ribosome. This is Elongation factor Ts, mitochondrial from Oryza sativa subsp. japonica (Rice).